The following is a 525-amino-acid chain: Acetyl-CoA hydrolase (525 aa).

280–284 (GIGNI) contributes to the CoA binding site. Residue Glu-305 is the 5-glutamyl coenzyme A thioester intermediate of the active site. Positions 395 and 399 each coordinate CoA.

The protein belongs to the acetyl-CoA hydrolase/transferase family.

It localises to the cytoplasm. It carries out the reaction acetyl-CoA + H2O = acetate + CoA + H(+). Required for utilization of acetate. This Neurospora crassa (strain ATCC 24698 / 74-OR23-1A / CBS 708.71 / DSM 1257 / FGSC 987) protein is Acetyl-CoA hydrolase (acu-8).